The following is a 175-amino-acid chain: Bacterial proteasome activator (175 aa).

A disordered region spans residues 152-175; the sequence is LPPGIQVPGAQRGGATHPGTGQYL. A HbYX motif motif is present at residues 173–175; it reads QYL.

This sequence belongs to the Bpa family. Forms a homooligomeric, either hexameric or heptameric, ring-like structure which stacks co-axially with the proteasomal alpha-rings.

Functionally, interacts with the core proteasome alpha-subunit (PrcA) through its C-terminal hydrophobic-tyrosine-X motif (HbYX motif). Interaction of Bpa with the proteasome stimulates proteasomal peptidase and casein degradation activity, which suggests Bpa could play a role in the removal of non-native or damaged proteins by influencing the conformation of the proteasome complex upon interaction. The protein is Bacterial proteasome activator of Mycolicibacterium smegmatis (strain ATCC 700084 / mc(2)155) (Mycobacterium smegmatis).